The following is a 193-amino-acid chain: Protein PATRONUS 1 (193 aa).

The short motif at 14 to 16 is the DEN-box element; that stretch reads DEN. The D-box motif lies at 46–49; sequence RKAL.

Interacts directly with the anaphase promoting complex/cyclosome (APC/C) through the CDC27B and CDC20-1 subunits. Expressed in somatic and reproductive tissues. Expressed in inflorescence, young buds, roots and basal portion of young leaves. Expressed in proliferating cells such as apical meristems of roots and shoots, expanding cotyledons and leaves, root vascular tissues, and in stomatal precursor cells.

The protein resides in the nucleus. The protein localises to the cytoplasm. Required for the maintenance of centromeric cohesion during interkinesis, until meiosis II. Required for regular configuration and segregation of sister chromatids in meiosis II. Also required for centromere cohesion during meiosis I. Involved in spindle organization at the end of telophase I and in meiosis II. Required to prevent precocious release of pericentromeric cohesins during meiosis, but not for cohesion establishment and monopolar orientation of kinetochores at meiosis I. Involved also in somatic development. Regulates mitotic cell division and ploidy stability in somatic cell types. May be involved in the organization of microtubules dynamics. Involved in abiotic stresses and mono- or divalent ions tolerance and may play a role in maintaining meristematic activity under saline conditions. PANS1 and GIG1 are part of a network linking centromere cohesion and cell cycle progression through control of APC/C activity. Regulates the number of dividing cells in root meristem and is necessary for the anaphase onset control through an APC/C-mediated pathway. Involved in maintaining correct chromosome arm cohesion under stress conditions. The protein is Protein PATRONUS 1 of Arabidopsis thaliana (Mouse-ear cress).